Here is a 165-residue protein sequence, read N- to C-terminus: SsrA-binding protein (165 aa).

This sequence belongs to the SmpB family.

It is found in the cytoplasm. Required for rescue of stalled ribosomes mediated by trans-translation. Binds to transfer-messenger RNA (tmRNA), required for stable association of tmRNA with ribosomes. tmRNA and SmpB together mimic tRNA shape, replacing the anticodon stem-loop with SmpB. tmRNA is encoded by the ssrA gene; the 2 termini fold to resemble tRNA(Ala) and it encodes a 'tag peptide', a short internal open reading frame. During trans-translation Ala-aminoacylated tmRNA acts like a tRNA, entering the A-site of stalled ribosomes, displacing the stalled mRNA. The ribosome then switches to translate the ORF on the tmRNA; the nascent peptide is terminated with the 'tag peptide' encoded by the tmRNA and targeted for degradation. The ribosome is freed to recommence translation, which seems to be the essential function of trans-translation. This is SsrA-binding protein from Prochlorococcus marinus (strain MIT 9515).